Reading from the N-terminus, the 792-residue chain is RAD50-interacting protein 1 (792 aa).

The interval 1–22 is disordered; that stretch reads MLPAGEIGASPAAPCCSESGDE. A coiled-coil region spans residues 103 to 124; that stretch reads IRSALKNAEESKQFLNQFLEQE. Residues 220–792 enclose the RINT1/TIP20 domain; sequence WHKILKDKLT…LRTNWPNTGK (573 aa).

The protein belongs to the RINT1 family. Component of the NRZ complex composed of NBAS, ZW10 and RINT1/TIP20L; NRZ associates with SNAREs STX18, USE1L, BNIP1/SEC20L and SEC22B (the assembly has been described as syntaxin 18 complex). Interacts directly with BNIP1/SEC20L and ZW10. Interacts with UVRAG. Interacts with RAD50 during late S and G2/M phases. Interacts with RBL2, preferentially with the active, hypophosphorylated form.

It is found in the cytoplasm. It localises to the endoplasmic reticulum membrane. Functionally, involved in regulation of membrane traffic between the Golgi and the endoplasmic reticulum (ER); the function is proposed to depend on its association in the NRZ complex which is believed to play a role in SNARE assembly at the ER. May play a role in cell cycle checkpoint control. Essential for telomere length control. This Homo sapiens (Human) protein is RAD50-interacting protein 1 (RINT1).